A 463-amino-acid polypeptide reads, in one-letter code: Kynureninase 2 (463 aa).

Pyridoxal 5'-phosphate-binding positions include Leu-134, Thr-135, 162–165 (FPSD), Asp-247, His-250, and Tyr-272. N6-(pyridoxal phosphate)lysine is present on Lys-273. 2 residues coordinate pyridoxal 5'-phosphate: Trp-312 and Asn-340.

This sequence belongs to the kynureninase family. As to quaternary structure, homodimer. Requires pyridoxal 5'-phosphate as cofactor.

It is found in the cytoplasm. It catalyses the reaction L-kynurenine + H2O = anthranilate + L-alanine + H(+). It carries out the reaction 3-hydroxy-L-kynurenine + H2O = 3-hydroxyanthranilate + L-alanine + H(+). The protein operates within amino-acid degradation; L-kynurenine degradation; L-alanine and anthranilate from L-kynurenine: step 1/1. Its pathway is cofactor biosynthesis; NAD(+) biosynthesis; quinolinate from L-kynurenine: step 2/3. Functionally, catalyzes the cleavage of L-kynurenine (L-Kyn) and L-3-hydroxykynurenine (L-3OHKyn) into anthranilic acid (AA) and 3-hydroxyanthranilic acid (3-OHAA), respectively. The protein is Kynureninase 2 (bna5-2) of Aspergillus niger (strain ATCC MYA-4892 / CBS 513.88 / FGSC A1513).